The following is a 417-amino-acid chain: Brevican core protein (417 aa).

Residues 1-22 (MAPLFLPLLIALALAPGPTASA) form the signal peptide. The region spanning 23-155 (DVLEGDSSED…SSDAVEVKVK (133 aa)) is the Ig-like V-type domain. Disulfide bonds link cysteine 57–cysteine 137, cysteine 179–cysteine 250, and cysteine 203–cysteine 224. N-linked (GlcNAc...) asparagine glycosylation is present at asparagine 130. 2 consecutive Link domains span residues 157–252 (VVFL…YCYA) and 257–354 (GELF…YCFR). N-linked (GlcNAc...) asparagine glycosylation occurs at asparagine 267. Disulfide bonds link cysteine 277–cysteine 352 and cysteine 301–cysteine 322. The N-linked (GlcNAc...) asparagine glycan is linked to asparagine 337.

It belongs to the aggrecan/versican proteoglycan family. As to expression, central nervous system.

The protein localises to the secreted. The protein resides in the extracellular space. Its subcellular location is the extracellular matrix. Its function is as follows. May play a role in the terminally differentiating and the adult nervous system during postnatal development. Could stabilize interactions between hyaluronan (HA) and brain proteoglycans. This Felis catus (Cat) protein is Brevican core protein (BCAN).